We begin with the raw amino-acid sequence, 436 residues long: S-locus-specific glycoprotein S6 (436 aa).

The N-terminal stretch at 1-31 (MKGVRKPYDNSYTLSFLLVFFVLILFCPAFS) is a signal peptide. The 123-residue stretch at 34-156 (TLSSTESLRI…SNNDASEYLW (123 aa)) folds into the Bulb-type lectin domain. 7 N-linked (GlcNAc...) asparagine glycosylation sites follow: Asn46, Asn64, Asn114, Asn121, Asn245, Asn261, and Asn390. Positions 351–431 (CSGDGFTRMK…HGQDLYVRLA (81 aa)) constitute a PAN domain. 2 disulfide bridges follow: Cys381–Cys406 and Cys389–Cys391.

In terms of tissue distribution, stigma.

Functionally, involved in sporophytic self-incompatibility system (the inability of flowering plants to achieve self-fertilization). In Brassica oleracea (Wild cabbage), this protein is S-locus-specific glycoprotein S6 (SLSG).